An 878-amino-acid polypeptide reads, in one-letter code: Alanine--tRNA ligase (878 aa).

Residues H567, H571, C669, and H673 each contribute to the Zn(2+) site.

The protein belongs to the class-II aminoacyl-tRNA synthetase family. It depends on Zn(2+) as a cofactor.

It is found in the cytoplasm. It carries out the reaction tRNA(Ala) + L-alanine + ATP = L-alanyl-tRNA(Ala) + AMP + diphosphate. Catalyzes the attachment of alanine to tRNA(Ala) in a two-step reaction: alanine is first activated by ATP to form Ala-AMP and then transferred to the acceptor end of tRNA(Ala). Also edits incorrectly charged Ser-tRNA(Ala) and Gly-tRNA(Ala) via its editing domain. This is Alanine--tRNA ligase from Rickettsia akari (strain Hartford).